The following is a 172-amino-acid chain: 3-hydroxydecanoyl-[acyl-carrier-protein] dehydratase (172 aa).

The active site involves His-71.

Belongs to the thioester dehydratase family. FabA subfamily. Homodimer.

Its subcellular location is the cytoplasm. The enzyme catalyses a (3R)-hydroxyacyl-[ACP] = a (2E)-enoyl-[ACP] + H2O. The catalysed reaction is (3R)-hydroxydecanoyl-[ACP] = (2E)-decenoyl-[ACP] + H2O. It carries out the reaction (2E)-decenoyl-[ACP] = (3Z)-decenoyl-[ACP]. It functions in the pathway lipid metabolism; fatty acid biosynthesis. Functionally, necessary for the introduction of cis unsaturation into fatty acids. Catalyzes the dehydration of (3R)-3-hydroxydecanoyl-ACP to E-(2)-decenoyl-ACP and then its isomerization to Z-(3)-decenoyl-ACP. Can catalyze the dehydratase reaction for beta-hydroxyacyl-ACPs with saturated chain lengths up to 16:0, being most active on intermediate chain length. This Vibrio parahaemolyticus serotype O3:K6 (strain RIMD 2210633) protein is 3-hydroxydecanoyl-[acyl-carrier-protein] dehydratase.